We begin with the raw amino-acid sequence, 413 residues long: CCA-adding enzyme (413 aa).

Positions 42 and 45 each coordinate ATP. CTP-binding residues include Ser42 and Lys45. Residues Asp54, Asp56, and Asp107 each contribute to the Mg(2+) site. Residues His130, Lys150, and Tyr159 each contribute to the ATP site. CTP-binding residues include His130, Lys150, and Tyr159.

This sequence belongs to the tRNA nucleotidyltransferase/poly(A) polymerase family. Archaeal CCA-adding enzyme subfamily. In terms of assembly, homodimer. It depends on Mg(2+) as a cofactor.

It carries out the reaction a tRNA precursor + 2 CTP + ATP = a tRNA with a 3' CCA end + 3 diphosphate. The catalysed reaction is a tRNA with a 3' CCA end + 2 CTP + ATP = a tRNA with a 3' CCACCA end + 3 diphosphate. In terms of biological role, catalyzes the addition and repair of the essential 3'-terminal CCA sequence in tRNAs without using a nucleic acid template. Adds these three nucleotides in the order of C, C, and A to the tRNA nucleotide-73, using CTP and ATP as substrates and producing inorganic pyrophosphate. tRNA 3'-terminal CCA addition is required both for tRNA processing and repair. Also involved in tRNA surveillance by mediating tandem CCA addition to generate a CCACCA at the 3' terminus of unstable tRNAs. While stable tRNAs receive only 3'-terminal CCA, unstable tRNAs are marked with CCACCA and rapidly degraded. The sequence is that of CCA-adding enzyme from Sulfurisphaera tokodaii (strain DSM 16993 / JCM 10545 / NBRC 100140 / 7) (Sulfolobus tokodaii).